The chain runs to 445 residues: Methylthioribose-1-phosphate isomerase (445 aa).

Aspartate 286 functions as the Proton donor in the catalytic mechanism.

The protein belongs to the eIF-2B alpha/beta/delta subunits family. MtnA subfamily.

It localises to the cytoplasm. It is found in the nucleus. It carries out the reaction 5-(methylsulfanyl)-alpha-D-ribose 1-phosphate = 5-(methylsulfanyl)-D-ribulose 1-phosphate. It participates in amino-acid biosynthesis; L-methionine biosynthesis via salvage pathway; L-methionine from S-methyl-5-thio-alpha-D-ribose 1-phosphate: step 1/6. Its function is as follows. Catalyzes the interconversion of methylthioribose-1-phosphate (MTR-1-P) into methylthioribulose-1-phosphate (MTRu-1-P). The protein is Methylthioribose-1-phosphate isomerase (mri1) of Sclerotinia sclerotiorum (strain ATCC 18683 / 1980 / Ss-1) (White mold).